Reading from the N-terminus, the 361-residue chain is MLYWLTQLLQGQYHAFRVFQYLTFRSILASLTALIVGLLCGPLMIRWLRGLQIGQMVRSDGPQTHLSKAGTPTMGGVLILLAITVSCLLWCDLRQTSLWLVLLVTLANGLVGWVDDYRKLVLKNSKGLPGRWKYFWQSVIALVAVSYLYWNASLPVHTQLTVPFFKTVTWDLGVFFPVLAYFVIVGSSNAVNLTDGLDGLAIMPIVMVAGALGVFAYASSNAVYSNYLGIPYVPNTGELTIFCSSIVGAGLGFLWYNSYPAQVFMGDVGSLALGAALGIVAVVVRQELVLLIMGGLFVIETLSVILQVGYFKYSGGKRLFRMAPLHHHFELKGWSEPKVIVRFWIITVVFVLCGLATLKLR.

10 helical membrane-spanning segments follow: residues 27-47, 70-90, 97-117, 134-154, 167-187, 199-219, 236-256, 263-283, 288-308, and 338-358; these read ILAS…MIRW, GTPT…CLLW, SLWL…VDDY, YFWQ…NASL, TVTW…IVGS, GLAI…AYAS, TGEL…FLWY, VFMG…VAVV, LVLL…ILQV, and KVIV…LATL.

The protein belongs to the glycosyltransferase 4 family. MraY subfamily. Mg(2+) is required as a cofactor.

Its subcellular location is the cell inner membrane. It carries out the reaction UDP-N-acetyl-alpha-D-muramoyl-L-alanyl-gamma-D-glutamyl-meso-2,6-diaminopimeloyl-D-alanyl-D-alanine + di-trans,octa-cis-undecaprenyl phosphate = di-trans,octa-cis-undecaprenyl diphospho-N-acetyl-alpha-D-muramoyl-L-alanyl-D-glutamyl-meso-2,6-diaminopimeloyl-D-alanyl-D-alanine + UMP. Its pathway is cell wall biogenesis; peptidoglycan biosynthesis. Catalyzes the initial step of the lipid cycle reactions in the biosynthesis of the cell wall peptidoglycan: transfers peptidoglycan precursor phospho-MurNAc-pentapeptide from UDP-MurNAc-pentapeptide onto the lipid carrier undecaprenyl phosphate, yielding undecaprenyl-pyrophosphoryl-MurNAc-pentapeptide, known as lipid I. The polypeptide is Phospho-N-acetylmuramoyl-pentapeptide-transferase (Legionella pneumophila subsp. pneumophila (strain Philadelphia 1 / ATCC 33152 / DSM 7513)).